A 433-amino-acid polypeptide reads, in one-letter code: D-amino acid dehydrogenase (433 aa).

3–17 contacts FAD; it reads VLVLGSGVIGTTSAY.

Belongs to the DadA oxidoreductase family. FAD is required as a cofactor.

The catalysed reaction is a D-alpha-amino acid + A + H2O = a 2-oxocarboxylate + AH2 + NH4(+). In terms of biological role, oxidative deamination of D-amino acids. The polypeptide is D-amino acid dehydrogenase (Pseudomonas syringae pv. tomato (strain ATCC BAA-871 / DC3000)).